The chain runs to 985 residues: Ankyrin repeat domain-containing protein 24 (985 aa).

ANK repeat units lie at residues 52–81 (EGKSAFHLAAMRGAAGCLEVMLAQGADVMS), 85–114 (AGYNALHLAAKYGHPECLKQLLEASCVVDI), 118–147 (SGWTALHHAAAGGCLSCSKLLCSFKAHMNP), 151–180 (SGATPLIIAAQMCHTDLCRLLLQQGAATND), and 184–213 (QGRTALMLACEGGSPETVEVLLQGGAQLSI). 5 disordered regions span residues 243–293 (RSSP…DRDA), 311–360 (IRGL…LGRE), 386–412 (QDEEGEMPDFPGADALMPKNQSPSAEE), 476–503 (YTEAMHSQQQQQEGEPPRAQEGEETAYQ), and 594–614 (DNAESEPVAAEDTGGKENPGM). Residues 291–488 (RDAYEEIVRL…AMHSQQQQQE (198 aa)) are a coiled coil. Basic and acidic residues-rich tracts occupy residues 311–326 (IRGLEQHKERRRKEPL) and 349–360 (EKQEEKESLGRE).

As to quaternary structure, homodimer. Interacts (via C-terminal domain) with TRIOBP (via C-terminal domain) isoform 4; recruits TRIOBP isoform 4 to stereocilia rootlets. Expressed in vestibular hair bundles.

It is found in the cell membrane. Its subcellular location is the cell projection. It localises to the stereocilium. In terms of biological role, component of the stereocilia rootlet in hair cells of inner ear. Bridges the apical plasma membrane with the lower rootlet and maintains normal distribution of TRIOBP, thereby reinforcing stereocilia insertion points and organizing rootlets for hearing with long-term resilience. This is Ankyrin repeat domain-containing protein 24 (Ankrd24) from Mus musculus (Mouse).